A 1157-amino-acid chain; its full sequence is ATP-dependent helicase/deoxyribonuclease subunit B (1157 aa).

Positions 1 to 299 constitute a UvrD-like helicase ATP-binding domain; sequence MSIRFIIGRA…SHLEKYFFVR (299 aa). ATP is bound at residue 8–15; the sequence is GRAGAGKT. The region spanning 279-590 is the UvrD-like helicase C-terminal domain; sequence GNTARFKSPA…LVASLERSRN (312 aa). Residues C792, C1112, C1115, and C1121 each contribute to the [4Fe-4S] cluster site.

The protein belongs to the helicase family. AddB/RexB type 1 subfamily. In terms of assembly, heterodimer of AddA and AddB. The cofactor is Mg(2+). [4Fe-4S] cluster is required as a cofactor.

Functionally, the heterodimer acts as both an ATP-dependent DNA helicase and an ATP-dependent, dual-direction single-stranded exonuclease. Recognizes the chi site generating a DNA molecule suitable for the initiation of homologous recombination. The AddB subunit has 5' -&gt; 3' nuclease activity but not helicase activity. This is ATP-dependent helicase/deoxyribonuclease subunit B from Pelotomaculum thermopropionicum (strain DSM 13744 / JCM 10971 / SI).